Here is a 98-residue protein sequence, read N- to C-terminus: Putative transcriptional regulator YdaS (98 aa).

Its function is as follows. When overexpressed, it induces Rac prophage excision, possibly to counteract the lethal toxicity of YdaT. Overexpression of ydaS or ydaST reduces growth and leads to loss of cell viability. May contribute to toxicity and morphological defects. The protein is Putative transcriptional regulator YdaS (ydaS) of Escherichia coli (strain K12).